A 217-amino-acid polypeptide reads, in one-letter code: Small ribosomal subunit protein uS3c (217 aa).

The KH type-2 domain occupies 46-117 (VQKHIKNSSN…RLRMTLIEIA (72 aa)).

It belongs to the universal ribosomal protein uS3 family. Part of the 30S ribosomal subunit.

The protein resides in the plastid. Its subcellular location is the chloroplast. The sequence is that of Small ribosomal subunit protein uS3c (rps3) from Marchantia polymorpha (Common liverwort).